The sequence spans 54 residues: UPF0391 membrane protein PFL_0093 (54 aa).

The next 2 helical transmembrane spans lie at 4 to 24 and 29 to 49; these read WAIT…GGIA and GIAK…FFFG.

Belongs to the UPF0391 family.

Its subcellular location is the cell membrane. This Pseudomonas fluorescens (strain ATCC BAA-477 / NRRL B-23932 / Pf-5) protein is UPF0391 membrane protein PFL_0093.